The primary structure comprises 117 residues: Calcitonin receptor-stimulating peptide 2 (117 aa).

The first 25 residues, 1 to 25, serve as a signal peptide directing secretion; that stretch reads MGFWKFPPFLVLSILVLYQAGMFHT. Positions 26-79 are excised as a propeptide; that stretch reads APVRLPLESSFDSATLTEEEVSLLLVAMVKDYVQMKATVLEQESEDFSITAQEK. Cysteines 81 and 86 form a disulfide.

Belongs to the calcitonin family. In terms of tissue distribution, mainly expressed in the thyroid gland and CNS. Found in the nerve cells of the cerebrum, hippocampus, hypothalamus, pons/midbrain and thalamus. Also detected in the glia-like cells of pons/midbrain and in meninx of tactus opticus.

It localises to the secreted. In Sus scrofa (Pig), this protein is Calcitonin receptor-stimulating peptide 2 (CRSP2).